Reading from the N-terminus, the 311-residue chain is Probable deoxyhypusine synthase (311 aa).

K284 acts as the Nucleophile in catalysis.

Belongs to the deoxyhypusine synthase family. NAD(+) is required as a cofactor.

The enzyme catalyses [eIF5A protein]-L-lysine + spermidine = [eIF5A protein]-deoxyhypusine + propane-1,3-diamine. The protein operates within protein modification; eIF5A hypusination. In terms of biological role, catalyzes the NAD-dependent oxidative cleavage of spermidine and the subsequent transfer of the butylamine moiety of spermidine to the epsilon-amino group of a specific lysine residue of the eIF-5A precursor protein to form the intermediate deoxyhypusine residue. In Sulfurisphaera tokodaii (strain DSM 16993 / JCM 10545 / NBRC 100140 / 7) (Sulfolobus tokodaii), this protein is Probable deoxyhypusine synthase (dys).